We begin with the raw amino-acid sequence, 260 residues long: NifU-like protein C1709.19c (260 aa).

The tract at residues 161-231 (IKELIETSIR…IPEVENVVQV (71 aa)) is nifU.

This sequence belongs to the NifU family.

The chain is NifU-like protein C1709.19c from Schizosaccharomyces pombe (strain 972 / ATCC 24843) (Fission yeast).